A 94-amino-acid chain; its full sequence is Fungal defensin scedosporisin-2 (94 aa).

The N-terminal stretch at 1 to 25 (MKFSNISIAALFTILASTAMAAPAA) is a signal peptide. The propeptide occupies 26-56 (DSPDSIVAREPAPVEETYEAPSGLEKRGFGC). Residues phenylalanine 54, glycine 55, and cysteine 56 each contribute to the beta-D-GlcNAc-(1-&gt;4)-Mur2Ac(oyl-L-Ala-gamma-D-Glu-L-Lys-D-Ala-D-Ala)-di-trans,octa-cis-undecaprenyl diphosphate site. Intrachain disulfides connect cysteine 56–cysteine 78, cysteine 63–cysteine 91, and cysteine 67–cysteine 93. The tract at residues 57-60 (PGSE) is interaction site with membrane interface. Histidine 66 contacts beta-D-GlcNAc-(1-&gt;4)-Mur2Ac(oyl-L-Ala-gamma-D-Glu-L-Lys-D-Ala-D-Ala)-di-trans,octa-cis-undecaprenyl diphosphate. Residues 83–90 (IPFVGRPR) are interaction site with membrane interface. Cysteine 91 is a beta-D-GlcNAc-(1-&gt;4)-Mur2Ac(oyl-L-Ala-gamma-D-Glu-L-Lys-D-Ala-D-Ala)-di-trans,octa-cis-undecaprenyl diphosphate binding site.

The protein belongs to the invertebrate defensin family.

The protein localises to the secreted. The protein resides in the target cell membrane. In terms of biological role, antibacterial peptide potently active against Gram-positive bacteria. May act by selectively inhibiting peptidoglycan biosynthesis through complex formation with the cell wall precursor lipid II (1:1 molar ratio) thus inhibiting cell wall synthesis. Shows remarkably activity against resistant isolates such as methicillin-resistant Staphylococcus aureus (MRSA) and vancomycin-resistant Enterococci (VRE) at the concentration of micromolar level. Does not act by destroying the membrane integrity, which is consistent with its nonamphiphilic architecture. Acts more rapidly than vancomycin. Shows low hemolysis and cytotoxicity and high serum stability. In vivo, is as efficient as vancomycin to protect mouse peritonitis models from MRSA infections. The chain is Fungal defensin scedosporisin-2 from Pseudallescheria apiosperma (Scedosporium apiospermum).